Reading from the N-terminus, the 262-residue chain is Putative hydro-lyase Mflv_5194 (262 aa).

Belongs to the D-glutamate cyclase family.

This Mycolicibacterium gilvum (strain PYR-GCK) (Mycobacterium gilvum (strain PYR-GCK)) protein is Putative hydro-lyase Mflv_5194.